The sequence spans 348 residues: uncharacterized protein (348 aa).

May be involved in apoptosis regulation. This is an uncharacterized protein from Rattus norvegicus (Rat).